A 510-amino-acid polypeptide reads, in one-letter code: Putative serine protease K12H4.7 (510 aa).

An N-terminal signal peptide occupies residues 1–19 (MKTLLAVLLAACVLTQVLS). The active-site Charge relay system is the serine 187. N-linked (GlcNAc...) asparagine glycosylation occurs at asparagine 234. Residue aspartate 452 is the Charge relay system of the active site. N-linked (GlcNAc...) asparagine glycosylation is present at asparagine 473. The active-site Charge relay system is the histidine 477.

Belongs to the peptidase S28 family.

The chain is Putative serine protease K12H4.7 from Caenorhabditis elegans.